The primary structure comprises 47 residues: UPF0391 membrane protein rrnAC2507 (47 aa).

The next 2 membrane-spanning stretches (helical) occupy residues 5–25 (VVLV…IAGL) and 27–47 (FRVA…TFLL).

Belongs to the UPF0391 family.

Its subcellular location is the cell membrane. This chain is UPF0391 membrane protein rrnAC2507, found in Haloarcula marismortui (strain ATCC 43049 / DSM 3752 / JCM 8966 / VKM B-1809) (Halobacterium marismortui).